Here is a 556-residue protein sequence, read N- to C-terminus: Formate--tetrahydrofolate ligase (556 aa).

65–72 (TPAGEGKS) contacts ATP.

Belongs to the formate--tetrahydrofolate ligase family.

It catalyses the reaction (6S)-5,6,7,8-tetrahydrofolate + formate + ATP = (6R)-10-formyltetrahydrofolate + ADP + phosphate. The protein operates within one-carbon metabolism; tetrahydrofolate interconversion. This chain is Formate--tetrahydrofolate ligase, found in Streptococcus mutans serotype c (strain ATCC 700610 / UA159).